The chain runs to 341 residues: S-adenosylmethionine:tRNA ribosyltransferase-isomerase (341 aa).

The protein belongs to the QueA family. In terms of assembly, monomer.

It localises to the cytoplasm. The enzyme catalyses 7-aminomethyl-7-carbaguanosine(34) in tRNA + S-adenosyl-L-methionine = epoxyqueuosine(34) in tRNA + adenine + L-methionine + 2 H(+). It functions in the pathway tRNA modification; tRNA-queuosine biosynthesis. In terms of biological role, transfers and isomerizes the ribose moiety from AdoMet to the 7-aminomethyl group of 7-deazaguanine (preQ1-tRNA) to give epoxyqueuosine (oQ-tRNA). This Chlorobium luteolum (strain DSM 273 / BCRC 81028 / 2530) (Pelodictyon luteolum) protein is S-adenosylmethionine:tRNA ribosyltransferase-isomerase.